The following is a 384-amino-acid chain: Neuropeptide Y receptor type 1 (384 aa).

Topologically, residues 1–44 (MNSTLFSQVENHSVHSNFSEKNAQLLAFENDDCHLPLAMIFTLA) are extracellular. N-linked (GlcNAc...) asparagine glycans are attached at residues asparagine 2, asparagine 11, and asparagine 17. The helical transmembrane segment at 45-65 (LAYGAVIILGVSGNLALIIII) threads the bilayer. Residues 66-76 (LKQKEMRNVTN) lie on the Cytoplasmic side of the membrane. The helical transmembrane segment at 77–97 (ILIVNLSFSDLLVAIMCLPFT) threads the bilayer. The Extracellular segment spans residues 98-116 (FVYTLMDHWVFGEAMCKLN). Cysteine 113 and cysteine 198 are joined by a disulfide. Residues 117 to 137 (PFVQCVSITVSIFSLVLIAVE) traverse the membrane as a helical segment. Residues 138–154 (RHQLIINPRGWRPNNRH) lie on the Cytoplasmic side of the membrane. The chain crosses the membrane as a helical span at residues 155–175 (AYVGIAVIWVLAVASSLPFLI). Topologically, residues 176–211 (YQVMTDEPFQNVTLDAYKDKYVCFDQFPSDSHRLSY) are extracellular. A helical membrane pass occupies residues 212–232 (TTLLLVLQYFGPLCFIFICYF). Residues 233–260 (KIYIRLKRRNNMMDKMRDNKYRSSETKR) lie on the Cytoplasmic side of the membrane. The chain crosses the membrane as a helical span at residues 261-281 (INIMLLSIVVAFAVCWLPLTI). At 282-299 (FNTVFDWNHQIIATCNHN) the chain is on the extracellular side. A helical membrane pass occupies residues 300 to 320 (LLFLLCHLTAMISTCVNPIFY). Residues 321–384 (GFLNKNFQRD…INNNDDNEKI (64 aa)) are Cytoplasmic-facing. Cysteine 338 carries S-palmitoyl cysteine lipidation. A Phosphoserine modification is found at serine 368.

It belongs to the G-protein coupled receptor 1 family.

Its subcellular location is the cell membrane. In terms of biological role, receptor for neuropeptide Y and peptide YY. The rank order of affinity of this receptor for pancreatic polypeptides is NPY &gt; [Pro-34] PYY, PYY and [Leu-31, Pro-34] NPY &gt; NPY (2-36) &gt; [Ile-31, Gln-34] PP and PYY (3-36) &gt; PP &gt; NPY free acid. This chain is Neuropeptide Y receptor type 1 (NPY1R), found in Homo sapiens (Human).